A 658-amino-acid polypeptide reads, in one-letter code: Integrator complex subunit 9 (658 aa).

Residues 550–574 form a disordered region; that stretch reads KHVLQLPPKPPQPPTSKKRKRVSDD. Residues 566 to 570 carry the Nuclear localization signal motif; it reads KKRKR.

The protein belongs to the metallo-beta-lactamase superfamily. RNA-metabolizing metallo-beta-lactamase-like family. INTS9 subfamily. In terms of assembly, component of the Integrator complex, composed of core subunits INTS1, INTS2, INTS3, INTS4, INTS5, INTS6, INTS7, INTS8, INTS9/RC74, INTS10, INTS11/CPSF3L, INTS12, INTS13, INTS14 and INTS15. The core complex associates with protein phosphatase 2A subunits PPP2CA and PPP2R1A, to form the Integrator-PP2A (INTAC) complex. INTS9 is part of the RNA endonuclease subcomplex, composed of INTS4, INTS9, INTS11 and inositol hexakisphosphate (InsP6).

It is found in the nucleus. It localises to the cytoplasm. Its function is as follows. Component of the integrator complex, a multiprotein complex that terminates RNA polymerase II (Pol II) transcription in the promoter-proximal region of genes. The integrator complex provides a quality checkpoint during transcription elongation by driving premature transcription termination of transcripts that are unfavorably configured for transcriptional elongation: the complex terminates transcription by (1) catalyzing dephosphorylation of the C-terminal domain (CTD) of Pol II subunit POLR2A/RPB1 and SUPT5H/SPT5, (2) degrading the exiting nascent RNA transcript via endonuclease activity and (3) promoting the release of Pol II from bound DNA. The integrator complex is also involved in terminating the synthesis of non-coding Pol II transcripts, such as enhancer RNAs (eRNAs), small nuclear RNAs (snRNAs), telomerase RNAs and long non-coding RNAs (lncRNAs). The chain is Integrator complex subunit 9 (INTS9) from Gallus gallus (Chicken).